The sequence spans 220 residues: Eukaryotic translation initiation factor 3 subunit B (220 aa).

Residues 1-94 form a sufficient for interaction with HCR1 and TIF32 region; sequence MPEPIAFDES…LIIELDSAAA (94 aa). Residues 1 to 220 are sufficient for interaction with PIC8; the sequence is MPEPIAFDES…GVQAWGGERI (220 aa). Positions 37–120 constitute an RRM domain; it reads HFVICDGAPI…HRLAVNKLPD (84 aa).

Belongs to the eIF-3 subunit B family. In terms of assembly, component of the eukaryotic translation initiation factor 3 (eIF-3) complex.

Its subcellular location is the cytoplasm. In terms of biological role, RNA-binding component of the eukaryotic translation initiation factor 3 (eIF-3) complex, which is involved in protein synthesis of a specialized repertoire of mRNAs and, together with other initiation factors, stimulates binding of mRNA and methionyl-tRNAi to the 40S ribosome. The eIF-3 complex specifically targets and initiates translation of a subset of mRNAs involved in cell proliferation. The polypeptide is Eukaryotic translation initiation factor 3 subunit B (TIF32) (Pichia angusta (Yeast)).